The primary structure comprises 203 residues: NAD(P)H dehydrogenase (quinone) (203 aa).

One can recognise a Flavodoxin-like domain in the interval 3–194 (VLIAYYSMYG…AAARYQGKHV (192 aa)). FMN is bound by residues 9–14 (SMYGHI) and 82–84 (TRF). Tyrosine 11 is a binding site for NAD(+). A substrate-binding site is contributed by tryptophan 102. Residues 117-123 (SSATQHG) and histidine 138 contribute to the FMN site.

It belongs to the WrbA family. It depends on FMN as a cofactor.

It carries out the reaction a quinone + NADH + H(+) = a quinol + NAD(+). It catalyses the reaction a quinone + NADPH + H(+) = a quinol + NADP(+). This Geotalea uraniireducens (strain Rf4) (Geobacter uraniireducens) protein is NAD(P)H dehydrogenase (quinone).